A 396-amino-acid polypeptide reads, in one-letter code: S-adenosylmethionine synthase (396 aa).

His-16 serves as a coordination point for ATP. Asp-18 contributes to the Mg(2+) binding site. Glu-44 contacts K(+). L-methionine-binding residues include Glu-57 and Gln-100. The flexible loop stretch occupies residues 100-110; the sequence is QSVDIAQGVDR. ATP-binding positions include 165–167, Asp-240, 246–247, Ala-263, and Lys-267; these read DAK and RK. Asp-240 is an L-methionine binding site. Lys-271 serves as a coordination point for L-methionine.

This sequence belongs to the AdoMet synthase family. In terms of assembly, homotetramer; dimer of dimers. Mg(2+) is required as a cofactor. It depends on K(+) as a cofactor.

The protein resides in the cytoplasm. It catalyses the reaction L-methionine + ATP + H2O = S-adenosyl-L-methionine + phosphate + diphosphate. It functions in the pathway amino-acid biosynthesis; S-adenosyl-L-methionine biosynthesis; S-adenosyl-L-methionine from L-methionine: step 1/1. Functionally, catalyzes the formation of S-adenosylmethionine (AdoMet) from methionine and ATP. The overall synthetic reaction is composed of two sequential steps, AdoMet formation and the subsequent tripolyphosphate hydrolysis which occurs prior to release of AdoMet from the enzyme. This is S-adenosylmethionine synthase from Pseudomonas putida (strain ATCC 700007 / DSM 6899 / JCM 31910 / BCRC 17059 / LMG 24140 / F1).